We begin with the raw amino-acid sequence, 329 residues long: Serpentine receptor class alpha-4 (329 aa).

Helical transmembrane passes span 25–45 (IIVLIPVFITFIFTYYAIKVV), 103–123 (LYLEVFVSGVAGMVYGQTGLL), 144–164 (GLAISVSVLCLSFITSRLIIW), 188–208 (YFQSICTLLALFNLVTSILIW), 238–258 (ICFLTFVQFIFFLVYSLGFFI), and 273–293 (LVAVWLYTPPYIAASFPILIF).

The protein belongs to the nematode receptor-like protein sra family.

Its subcellular location is the membrane. This chain is Serpentine receptor class alpha-4 (sra-4), found in Caenorhabditis elegans.